A 162-amino-acid chain; its full sequence is Cyclic pyranopterin monophosphate synthase (162 aa).

Substrate is bound by residues Leu-75–His-77 and Met-113–Glu-114. Residue Asp-128 is part of the active site.

The protein belongs to the MoaC family. In terms of assembly, homohexamer; trimer of dimers.

It carries out the reaction (8S)-3',8-cyclo-7,8-dihydroguanosine 5'-triphosphate = cyclic pyranopterin phosphate + diphosphate. Its pathway is cofactor biosynthesis; molybdopterin biosynthesis. Functionally, catalyzes the conversion of (8S)-3',8-cyclo-7,8-dihydroguanosine 5'-triphosphate to cyclic pyranopterin monophosphate (cPMP). This is Cyclic pyranopterin monophosphate synthase from Burkholderia cenocepacia (strain HI2424).